The chain runs to 31 residues: Malate dehydrogenase, mitochondrial (31 aa).

NAD(+) contacts are provided by residues 9-19 (GIGQPLSLLMK) and 20-31 (DDLFNINAGIVK).

Belongs to the LDH/MDH superfamily. MDH type 1 family. In terms of assembly, homodimer.

It localises to the mitochondrion matrix. It catalyses the reaction (S)-malate + NAD(+) = oxaloacetate + NADH + H(+). This chain is Malate dehydrogenase, mitochondrial, found in Imperata cylindrica (Cogon grass).